The sequence spans 138 residues: Putative phosphatidylinositol 3,4,5-trisphosphate 3-phosphatase TPTE2P1 (138 aa).

In terms of domain architecture, C2 tensin-type spans M1 to V75.

This Homo sapiens (Human) protein is Putative phosphatidylinositol 3,4,5-trisphosphate 3-phosphatase TPTE2P1 (TPTE2P1).